Here is an 875-residue protein sequence, read N- to C-terminus: Kelch-like protein 29 (875 aa).

A compositionally biased stretch (polar residues) spans 115–126 (WGQTPINQSTPW). Disordered stretches follow at residues 115–145 (WGQT…PGTG) and 248–291 (GPTA…DSAH). Positions 131-140 (PPSKQMRESD) are enriched in basic and acidic residues. Residues 329–401 (TDLKIVVEGR…VYTGSLVIDS (73 aa)) form the BTB domain. 6 Kelch repeats span residues 585–635 (VIVL…VSAG), 637–683 (NIYL…VYDG), 684–730 (KIYT…VCGG), 732–778 (IYVF…TLNG), 779–821 (FVFI…VLDG), and 822–870 (KIYA…VIKK).

The protein is Kelch-like protein 29 (KLHL29) of Homo sapiens (Human).